A 314-amino-acid chain; its full sequence is Prohormone-3 (314 aa).

A signal peptide spans 1-19 (MGRVLLSASSLLLHIQVFT). The chain crosses the membrane as a helical span at residues 90–112 (YTCVALTVVALVSTMHFGVEAWG).

It localises to the membrane. The polypeptide is Prohormone-3 (Apis mellifera (Honeybee)).